The sequence spans 680 residues: Chaperone protein dnaK3 (680 aa).

Thr-205 is modified (phosphothreonine; by autocatalysis). Residues 640–680 (GRERRRDDDEDEWAEPPRTRRSRSYSQRADSAPWDDWDDDW) form a disordered region.

It belongs to the heat shock protein 70 family.

Functionally, acts as a chaperone. The polypeptide is Chaperone protein dnaK3 (dnaK3) (Thermosynechococcus vestitus (strain NIES-2133 / IAM M-273 / BP-1)).